The primary structure comprises 266 residues: HLA class II histocompatibility antigen, DR beta 4 chain (266 aa).

A signal peptide spans 1–29; that stretch reads MVCLKLPGGSCMAALTVTLTVLSSPLALA. Positions 30–124 are beta-1; it reads GDTQPRFLEQ…VESFTVQRRV (95 aa). At 30 to 227 the chain is on the extracellular side; that stretch reads GDTQPRFLEQ…SARSESAQSK (198 aa). Disulfide bonds link C44–C108 and C146–C202. N-linked (GlcNAc...) asparagine glycosylation is present at N48. The tract at residues 125 to 227 is beta-2; the sequence is QPKVTVYPSK…SARSESAQSK (103 aa). Positions 126 to 216 constitute an Ig-like C1-type domain; the sequence is PKVTVYPSKT…PSMMSPLTVQ (91 aa). Residues 228-250 form a helical membrane-spanning segment; sequence MLSGVGGFVLGLLFLGTGLFIYF. Over 251-266 the chain is Cytoplasmic; that stretch reads RNQKGHSGLQPTGLLS. A Glycyl lysine isopeptide (Lys-Gly) (interchain with G-Cter in ubiquitin) cross-link involves residue K254.

Belongs to the MHC class II family. As to quaternary structure, heterodimer of an alpha and a beta subunit; also referred as MHC class II molecule. In the endoplasmic reticulum (ER) it forms a heterononamer; 3 MHC class II molecules bind to a CD74 homotrimer (also known as invariant chain or HLA class II histocompatibility antigen gamma chain). In the endosomal/lysosomal system; CD74 undergoes sequential degradation by various proteases; leaving a small fragment termed CLIP on each MHC class II molecule. MHC class II molecule interacts with HLA_DM, and HLA_DO in B-cells, in order to release CLIP and facilitate the binding of antigenic peptides. Ubiquitinated by MARCH1 and MARCH8 at Lys-254 leading to sorting into the endosome system and down-regulation of MHC class II. When associated with ubiquitination of the alpha subunit of HLA-DR: HLA-DRA 'Lys-244', the down-regulation of MHC class II may be highly effective.

The protein resides in the cell membrane. Its subcellular location is the endoplasmic reticulum membrane. The protein localises to the golgi apparatus. It is found in the trans-Golgi network membrane. It localises to the endosome membrane. The protein resides in the lysosome membrane. Its subcellular location is the late endosome membrane. Binds peptides derived from antigens that access the endocytic route of antigen presenting cells (APC) and presents them on the cell surface for recognition by the CD4 T-cells. The peptide binding cleft accommodates peptides of 10-30 residues. The peptides presented by MHC class II molecules are generated mostly by degradation of proteins that access the endocytic route, where they are processed by lysosomal proteases and other hydrolases. Exogenous antigens that have been endocytosed by the APC are thus readily available for presentation via MHC II molecules, and for this reason this antigen presentation pathway is usually referred to as exogenous. As membrane proteins on their way to degradation in lysosomes as part of their normal turn-over are also contained in the endosomal/lysosomal compartments, exogenous antigens must compete with those derived from endogenous components. Autophagy is also a source of endogenous peptides, autophagosomes constitutively fuse with MHC class II loading compartments. In addition to APCs, other cells of the gastrointestinal tract, such as epithelial cells, express MHC class II molecules and CD74 and act as APCs, which is an unusual trait of the GI tract. To produce a MHC class II molecule that presents an antigen, three MHC class II molecules (heterodimers of an alpha and a beta chain) associate with a CD74 trimer in the ER to form a heterononamer. Soon after the entry of this complex into the endosomal/lysosomal system where antigen processing occurs, CD74 undergoes a sequential degradation by various proteases, including CTSS and CTSL, leaving a small fragment termed CLIP (class-II-associated invariant chain peptide). The removal of CLIP is facilitated by HLA-DM via direct binding to the alpha-beta-CLIP complex so that CLIP is released. HLA-DM stabilizes MHC class II molecules until primary high affinity antigenic peptides are bound. The MHC II molecule bound to a peptide is then transported to the cell membrane surface. In B-cells, the interaction between HLA-DM and MHC class II molecules is regulated by HLA-DO. Primary dendritic cells (DCs) also to express HLA-DO. Lysosomal microenvironment has been implicated in the regulation of antigen loading into MHC II molecules, increased acidification produces increased proteolysis and efficient peptide loading. The chain is HLA class II histocompatibility antigen, DR beta 4 chain (HLA-DRB4) from Homo sapiens (Human).